Reading from the N-terminus, the 218-residue chain is Ribonuclease HII (218 aa).

The region spanning D13–T202 is the RNase H type-2 domain. D19, E20, and D111 together coordinate a divalent metal cation.

The protein belongs to the RNase HII family. The cofactor is Mn(2+). It depends on Mg(2+) as a cofactor.

It localises to the cytoplasm. The enzyme catalyses Endonucleolytic cleavage to 5'-phosphomonoester.. Endonuclease that specifically degrades the RNA of RNA-DNA hybrids. The chain is Ribonuclease HII from Pseudomonas syringae pv. syringae (strain B728a).